Here is a 379-residue protein sequence, read N- to C-terminus: Homoserine O-succinyltransferase (379 aa).

Residues 51-360 (NAVLICHALS…DAPQGHDAFL (310 aa)) enclose the AB hydrolase-1 domain. Catalysis depends on serine 157, which acts as the Nucleophile. A substrate-binding site is contributed by arginine 227. Active-site residues include aspartate 323 and histidine 356. Aspartate 357 serves as a coordination point for substrate.

It belongs to the AB hydrolase superfamily. MetX family. As to quaternary structure, homodimer.

It is found in the cytoplasm. The catalysed reaction is L-homoserine + succinyl-CoA = O-succinyl-L-homoserine + CoA. Its pathway is amino-acid biosynthesis; L-methionine biosynthesis via de novo pathway; O-succinyl-L-homoserine from L-homoserine: step 1/1. Its function is as follows. Transfers a succinyl group from succinyl-CoA to L-homoserine, forming succinyl-L-homoserine. The chain is Homoserine O-succinyltransferase from Ectopseudomonas mendocina (strain ymp) (Pseudomonas mendocina).